The primary structure comprises 425 residues: MTRPSVSTFKAPKGTYDLLPPDSAKFLAVREAIAAPLRNSGYGYIETPGFENVELFARGVGESTDIVTKEMYVFETKGGDRLALRPETTAPVLRAVLEANLHKAGNLPVKVWYSGSQYRYERPQKGRYRHFSQVGAEAIGAEDPALDAELIILADQSYRALGLQDFRILLNSLGDQECRPVYRAALQDFLRGLDLDEETLRRAEINPLRVLDDKRPDVQKQLTEAPLLRDYLCDACKAYHEEVRELITAAGVVFEDDPKLVRGLDYYTRTTFEFVHDGLGSQSAVGGGGRYDGLSEMIGGPSLPSVGWALGVDRTVLALEAEGIELDIPSATSVFAVPLGEEARRILFAKVTELRKNGVAADFSYGGKGLKAAMKAANRSGARYTLVLGERDLAEGVVQLKDMESGEQTAIGVNEIVAELESRLG.

This sequence belongs to the class-II aminoacyl-tRNA synthetase family. Homodimer.

Its subcellular location is the cytoplasm. It catalyses the reaction tRNA(His) + L-histidine + ATP = L-histidyl-tRNA(His) + AMP + diphosphate + H(+). The polypeptide is Histidine--tRNA ligase (Streptomyces coelicolor (strain ATCC BAA-471 / A3(2) / M145)).